Reading from the N-terminus, the 378-residue chain is tRNA (guanine(26)-N(2))-dimethyltransferase (378 aa).

Residues 4–374 (KEVTEGKVRI…KGYEEIIRCV (371 aa)) form the Trm1 methyltransferase domain. Positions 44, 69, 87, 114, and 115 each coordinate S-adenosyl-L-methionine. The Zn(2+) site is built by Cys-246, Cys-249, Cys-263, and Cys-266.

Belongs to the class I-like SAM-binding methyltransferase superfamily. Trm1 family.

The enzyme catalyses guanosine(26) in tRNA + 2 S-adenosyl-L-methionine = N(2)-dimethylguanosine(26) in tRNA + 2 S-adenosyl-L-homocysteine + 2 H(+). Dimethylates a single guanine residue at position 26 of a number of tRNAs using S-adenosyl-L-methionine as donor of the methyl groups. The polypeptide is tRNA (guanine(26)-N(2))-dimethyltransferase (Saccharolobus islandicus (strain M.16.27) (Sulfolobus islandicus)).